The primary structure comprises 30 residues: Photosystem I reaction center subunit XII (30 aa).

Residues 7–27 form a helical membrane-spanning segment; it reads VFIGLVIALVPAILAFKLGLS.

Belongs to the PsaM family.

Its subcellular location is the plastid. It is found in the chloroplast thylakoid membrane. The sequence is that of Photosystem I reaction center subunit XII from Cyanidium caldarium (Red alga).